The chain runs to 531 residues: Probable bifunctional methylthioribulose-1-phosphate dehydratase/enolase-phosphatase E1 2 (531 aa).

A methylthioribulose-1-phosphate dehydratase region spans residues 1–248 (MGVPSEGAVG…AIKLHQLGLD (248 aa)). Residue C120 coordinates substrate. Zn(2+)-binding residues include H138 and H140. Catalysis depends on E163, which acts as the Proton donor/acceptor; for methylthioribulose-1-phosphate dehydratase activity. Zn(2+) is bound at residue H213. The enolase-phosphatase E1 stretch occupies residues 292–531 (ILLDIEGTTT…FRTIETFLEI (240 aa)). The Mg(2+) site is built by D295 and E297. Substrate is bound by residues 430 to 431 (SS) and K464. D490 provides a ligand contact to Mg(2+).

It in the N-terminal section; belongs to the aldolase class II family. MtnB subfamily. The protein in the C-terminal section; belongs to the HAD-like hydrolase superfamily. MasA/MtnC family. It depends on Zn(2+) as a cofactor. Requires Mg(2+) as cofactor.

It carries out the reaction 5-(methylsulfanyl)-D-ribulose 1-phosphate = 5-methylsulfanyl-2,3-dioxopentyl phosphate + H2O. The catalysed reaction is 5-methylsulfanyl-2,3-dioxopentyl phosphate + H2O = 1,2-dihydroxy-5-(methylsulfanyl)pent-1-en-3-one + phosphate. It functions in the pathway amino-acid biosynthesis; L-methionine biosynthesis via salvage pathway; L-methionine from S-methyl-5-thio-alpha-D-ribose 1-phosphate: step 2/6. Its pathway is amino-acid biosynthesis; L-methionine biosynthesis via salvage pathway; L-methionine from S-methyl-5-thio-alpha-D-ribose 1-phosphate: step 3/6. The protein operates within amino-acid biosynthesis; L-methionine biosynthesis via salvage pathway; L-methionine from S-methyl-5-thio-alpha-D-ribose 1-phosphate: step 4/6. This Vitis vinifera (Grape) protein is Probable bifunctional methylthioribulose-1-phosphate dehydratase/enolase-phosphatase E1 2.